The primary structure comprises 399 residues: Phosphoglycerate kinase (399 aa).

Residues 21–23 (DFN), R36, 59–62 (HLGR), R120, and R158 contribute to the substrate site. Residues K209, G297, E328, and 355-358 (GGDS) contribute to the ATP site.

It belongs to the phosphoglycerate kinase family. As to quaternary structure, monomer.

It localises to the cytoplasm. The catalysed reaction is (2R)-3-phosphoglycerate + ATP = (2R)-3-phospho-glyceroyl phosphate + ADP. Its pathway is carbohydrate degradation; glycolysis; pyruvate from D-glyceraldehyde 3-phosphate: step 2/5. This chain is Phosphoglycerate kinase, found in Streptococcus thermophilus (strain ATCC BAA-250 / LMG 18311).